Reading from the N-terminus, the 554-residue chain is Cytochrome P450 monooxygenase himC (554 aa).

The helical transmembrane segment at 52-72 threads the bilayer; it reads YSVASVAIAGFTALVVSVALY. N-linked (GlcNAc...) asparagine glycans are attached at residues Asn-110, Asn-328, Asn-414, and Asn-425. Cys-501 serves as a coordination point for heme.

It belongs to the cytochrome P450 family. The cofactor is heme.

The protein localises to the membrane. It participates in secondary metabolite biosynthesis. Functionally, cytochrome P450 monooxygenase; part of the him gene cluster that mediates the biosynthesis of himeic acid A, a ubiquitin-activating enzyme (E1) inhibitor. First, himA, together with the trans-enoyl reductase himH, catalyzes the formation of apolyketide chain, which is then condensed with leucine by the NRPS activity of himA. Dieckmann cyclization and release from himA gives a tetramic acid intermediate as the product of himA PKS-NRPS. HimG then catalyzes alpha-oxidation of the tetramic acid ring, with a subsequent rearrangement to yield apyrone intermediate. Two terminal methyl groups of polyketide and amide side chains are oxidized to carboxylic acids by himC cytochrome P450 monooxygenase to form himeic acid A. Himeic acid A is further converted to himeic acid B and C during culture growth. No gene responsible for pyrone to pyridone conversion was found in the him gene cluster and himeic acid A is non-enzymatically converted to himeic acid C by the incorporation of an ammonium nitrogen atom in a pH5 buffer, and to himeic acid B at a conversion ratio of 50% during incubation in MeOH for 5 days. The polypeptide is Cytochrome P450 monooxygenase himC (Aspergillus japonicus).